The following is a 212-amino-acid chain: MTHSKRWLEEHEKDPYVKRAKKEGYPSRAAYKLLEIHQKYKLFKPSMNVIDLGAAPGGWSQVAKDLVGPKGVVIAIDLLPMQSMLDVIFIQGDFNEPEIFNQLEAIVAKKTLTGQVDLVISDMAPNISGIKNVDQSRSLHLVELAWDCAQKLLARGGTFLVKVFQGPGVDRFLINLRPYFNQVKFLKPSASRSRSSEIYILAGEFLGYNQRV.

5 residues coordinate S-adenosyl-L-methionine: glycine 57, tryptophan 59, aspartate 77, aspartate 93, and aspartate 122. Lysine 162 (proton acceptor) is an active-site residue.

It belongs to the class I-like SAM-binding methyltransferase superfamily. RNA methyltransferase RlmE family.

Its subcellular location is the cytoplasm. It catalyses the reaction uridine(2552) in 23S rRNA + S-adenosyl-L-methionine = 2'-O-methyluridine(2552) in 23S rRNA + S-adenosyl-L-homocysteine + H(+). In terms of biological role, specifically methylates the uridine in position 2552 of 23S rRNA at the 2'-O position of the ribose in the fully assembled 50S ribosomal subunit. The protein is Ribosomal RNA large subunit methyltransferase E of Coxiella burnetii (strain RSA 493 / Nine Mile phase I).